Reading from the N-terminus, the 940-residue chain is Insulin receptor substrate 1 (940 aa).

One can recognise a PH domain in the interval 8-109 (GMVLSGYHKK…WLDKLLLLQR (102 aa)). Positions 122-236 (YEHVWQVIIQ…SAMSAKTDSN (115 aa)) constitute an IRS-type PTB domain. Ser284, Ser285, and Ser340 each carry phosphoserine. Tyr407 carries the post-translational modification Phosphotyrosine; by INSR. The YXXM motif 1 signature appears at 407–410 (YIPM). The segment covering 523–540 (NRSQNNISKEGPISGTST) has biased composition (polar residues). The interval 523–549 (NRSQNNISKEGPISGTSTNREKKSTSA) is disordered. Ser548 is subject to Phosphoserine. Residues 639–642 (YLEM) carry the YXXM motif 2 motif. The residue at position 883 (Tyr883) is a Phosphotyrosine; by INSR. Positions 895 to 915 (NPAKYLKRGSRESPPVATCAE) are disordered. Phosphoserine is present on residues Ser904 and Ser907. Position 920 is a phosphotyrosine; by INSR (Tyr920).

As to quaternary structure, bindings to phosphatidylinositol 3-kinase and SHP2.

Activates phosphatidylinositol 3-kinase when bound to the regulatory p85 subunit. May mediate the control of various cellular processes by insulin-like peptides. When phosphorylated by the insulin receptor binds specifically to various cellular proteins containing SH2 domains. Involved in control of cell proliferation, cell size, and body and organ growth throughout development. Also has a role in a signaling pathway controlling the physiological response required to endure periods of low nutrient conditions. Insulin/insulin-like growth factor (IGF) signaling pathway has a role in regulating aging and is necessary in the ovary for vitellogenic maturation. In Drosophila ananassae (Fruit fly), this protein is Insulin receptor substrate 1.